Here is a 282-residue protein sequence, read N- to C-terminus: Putative hydrolase Bcen_5340 (282 aa).

Mg(2+)-binding residues include E124, E126, and D155.

The protein belongs to the FAH family. Mg(2+) is required as a cofactor.

The sequence is that of Putative hydrolase Bcen_5340 from Burkholderia orbicola (strain AU 1054).